The following is a 271-amino-acid chain: DNA repair protein RecO (271 aa).

The protein belongs to the RecO family.

Functionally, involved in DNA repair and RecF pathway recombination. The polypeptide is DNA repair protein RecO (Synechococcus sp. (strain CC9311)).